We begin with the raw amino-acid sequence, 279 residues long: 4-diphosphocytidyl-2-C-methyl-D-erythritol kinase (279 aa).

Residue K10 is part of the active site. Residue P91–A101 coordinates ATP. D130 is an active-site residue.

The protein belongs to the GHMP kinase family. IspE subfamily.

The catalysed reaction is 4-CDP-2-C-methyl-D-erythritol + ATP = 4-CDP-2-C-methyl-D-erythritol 2-phosphate + ADP + H(+). It participates in isoprenoid biosynthesis; isopentenyl diphosphate biosynthesis via DXP pathway; isopentenyl diphosphate from 1-deoxy-D-xylulose 5-phosphate: step 3/6. Functionally, catalyzes the phosphorylation of the position 2 hydroxy group of 4-diphosphocytidyl-2C-methyl-D-erythritol. The sequence is that of 4-diphosphocytidyl-2-C-methyl-D-erythritol kinase from Ruegeria pomeroyi (strain ATCC 700808 / DSM 15171 / DSS-3) (Silicibacter pomeroyi).